We begin with the raw amino-acid sequence, 307 residues long: Small ribosomal subunit protein uS5m (307 aa).

Residues 1–13 constitute a mitochondrion transit peptide; that stretch reads MFKRQLSTSVRYL. In terms of domain architecture, S5 DRBM spans 144–208; it reads LTMKPLVMKR…WDAVRNLKEI (65 aa).

Belongs to the universal ribosomal protein uS5 family. As to quaternary structure, component of the mitochondrial small ribosomal subunit (mt-SSU). Mature yeast 74S mitochondrial ribosomes consist of a small (37S) and a large (54S) subunit. The 37S small subunit contains a 15S ribosomal RNA (15S mt-rRNA) and 34 different proteins. The 54S large subunit contains a 21S rRNA (21S mt-rRNA) and 46 different proteins. uS3m, uS4m and uS5m form the narrow entry site of the mRNA channel.

The protein resides in the mitochondrion. In terms of biological role, component of the mitochondrial ribosome (mitoribosome), a dedicated translation machinery responsible for the synthesis of mitochondrial genome-encoded proteins, including at least some of the essential transmembrane subunits of the mitochondrial respiratory chain. The mitoribosomes are attached to the mitochondrial inner membrane and translation products are cotranslationally integrated into the membrane. This chain is Small ribosomal subunit protein uS5m (MRPS5), found in Saccharomyces cerevisiae (strain ATCC 204508 / S288c) (Baker's yeast).